The chain runs to 204 residues: MDSKKAILMLSLLAMALISSVMSARDLTETSTDAKKEVVEKTNEVNDAKYGGGYNHGGGYNGGGYNHGGGYNHGGGGYHNGGGGYNHGGGGYNGGGGHGGHGGGGYNGGGGHGGHGGGGYNGGGGHGGHGGAESVAVQTEEKTNEVNDAKYGGGSNYNDGRGGYNHGGGGYNHGGGGHGGHGGHGGHGGHGGHGAVQTEDNTQN.

Tandem repeats lie at residues 54 to 59, 65 to 70, 71 to 76, 78 to 83, 85 to 90, 98 to 100, 101 to 103, 112 to 114, 115 to 117, 126 to 128, 129 to 131, 164 to 169, 171 to 176, 178 to 180, 181 to 183, 184 to 186, 187 to 189, and 190 to 192. The interval 54–176 is 7 X 6 AA repeats of Y-N-H-G-G-G; that stretch reads YNHGGGYNGG…GGGGYNHGGG (123 aa). The segment at 98–192 is 11 X 3 AA repeats of H-G-G; sequence HGGHGGGGYN…GHGGHGGHGG (95 aa). Residues 169 to 194 show a composition bias toward gly residues; it reads GGYNHGGGGHGGHGGHGGHGGHGGHG. Residues 169 to 204 form a disordered region; sequence GGYNHGGGGHGGHGGHGGHGGHGGHGAVQTEDNTQN.

This sequence belongs to the GRP family.

Functionally, may be involved in resistance of the plant to environmental stress. This is Cold and drought-regulated protein CORA (CORA) from Medicago sativa (Alfalfa).